The sequence spans 415 residues: Serine/threonine transporter SstT (415 aa).

8 helical membrane passes run I23–A43, L47–V67, I85–F105, A144–L164, A181–V201, L220–F240, G303–V323, and V333–I353.

Belongs to the dicarboxylate/amino acid:cation symporter (DAACS) (TC 2.A.23) family.

The protein resides in the cell inner membrane. It catalyses the reaction L-serine(in) + Na(+)(in) = L-serine(out) + Na(+)(out). The catalysed reaction is L-threonine(in) + Na(+)(in) = L-threonine(out) + Na(+)(out). Its function is as follows. Involved in the import of serine and threonine into the cell, with the concomitant import of sodium (symport system). This Cronobacter sakazakii (strain ATCC BAA-894) (Enterobacter sakazakii) protein is Serine/threonine transporter SstT.